The sequence spans 452 residues: MNKILIAAASSGAGKTTVTLGIMQALKKRGFAVQPFKVGPDYIDTNYHQAITGVASINLDSFLIDDDEMLASLFQKHGESADISVIEGVMGLFDGLGTDRDNASTSFIAKCTKTPVILVVDGKAISTSAAAIVDGFNRFDPELKIAGVIINRVASENHFSLIKGAIERYTDVPVLGYLPKNAAVALPERHLGLVPQEEMTELEAKWELLSDLITTHVDLDKLLEISKSSENLSTSKAQMKVADFSGLRVAYALDAAFHFYYQDNLDLIRLTGAELIPFSPLEDNEVPEADFIYIGGGFPEIFAKQLNDNRSMRKSILAAHEKGIPIYAECGGLMYLGSSLEMEGKQYEMVGVFNGISKMTTRLRKFGYCIAEPLEETLIGKKGMSIRGHEFHHSVFETTETACMKLSKKRDGEIVKEWRGGYQKGNTFASYLHIHFYQNPAILMQMFGAGKR.

The 194-residue stretch at 248-441 (RVAYALDAAF…LHIHFYQNPA (194 aa)) folds into the GATase cobBQ-type domain. The active-site Nucleophile is cysteine 330.

Belongs to the CobB/CbiA family. The cofactor is Mg(2+).

It catalyses the reaction cob(II)yrinate + 2 L-glutamine + 2 ATP + 2 H2O = cob(II)yrinate a,c diamide + 2 L-glutamate + 2 ADP + 2 phosphate + 2 H(+). It participates in cofactor biosynthesis; adenosylcobalamin biosynthesis; cob(II)yrinate a,c-diamide from sirohydrochlorin (anaerobic route): step 10/10. Catalyzes the ATP-dependent amidation of the two carboxylate groups at positions a and c of cobyrinate, using either L-glutamine or ammonia as the nitrogen source. This is Cobyrinate a,c-diamide synthase from Listeria innocua serovar 6a (strain ATCC BAA-680 / CLIP 11262).